Here is a 406-residue protein sequence, read N- to C-terminus: Purine nucleoside permease (406 aa).

The N-terminal stretch at Met-1–Ala-22 is a signal peptide.

This sequence belongs to the NUP family. Predicted to be a substrate for cleavage by KEX2.

Its activity is regulated as follows. Mammalian nucleoside transport inhibitors dipyridamole and NBMPR inhibit adenosine transport by NUP. Its function is as follows. Nucleoside permease that transports adenosine and guanosine. Does not show any transport activities towards cytidine, adenine, guanine, uridine, and uracil. The sequence is that of Purine nucleoside permease from Candida albicans (strain SC5314 / ATCC MYA-2876) (Yeast).